The sequence spans 187 residues: Tumor necrosis factor ligand superfamily member 4 (187 aa).

Topologically, residues 1–23 are cytoplasmic; sequence MEGVRPLEENVGNAPRPRFERNK. Residues 24–44 traverse the membrane as a helical; Signal-anchor for type II membrane protein segment; that stretch reads LLLVASVVQALGLLLCLTYVC. The Extracellular segment spans residues 45–187; sequence QHSHAPEVSL…LQNPGGYCAP (143 aa). The THD domain maps to 58 to 177; sequence PIENIMTQLQ…SVNAGELIVI (120 aa). Intrachain disulfides connect C74–C164 and C101–C185. N94 and N156 each carry an N-linked (GlcNAc...) asparagine glycan.

This sequence belongs to the tumor necrosis factor family. In terms of assembly, homotrimer.

It is found in the membrane. In terms of biological role, cytokine that binds to TNFRSF4. Co-stimulates T-cell proliferation and cytokine production. The polypeptide is Tumor necrosis factor ligand superfamily member 4 (TNFSF4) (Oryctolagus cuniculus (Rabbit)).